A 97-amino-acid chain; its full sequence is uncharacterized protein (97 aa).

The segment at 38–97 (TSPPDWNKFSGKVSINEPTTSKSKSKSTSTSTSTSTSTSTSTSTSSSTSSTSSTTSSINK) is disordered. Over residues 56 to 97 (TTSKSKSKSTSTSTSTSTSTSTSTSTSSSTSSTSSTTSSINK) the composition is skewed to low complexity.

This is an uncharacterized protein from Dictyostelium discoideum (Social amoeba).